We begin with the raw amino-acid sequence, 263 residues long: Ribosomal RNA small subunit methyltransferase J (263 aa).

Residues 115 to 116, 131 to 132, and Asp-181 contribute to the S-adenosyl-L-methionine site; these read RD and ER.

Belongs to the methyltransferase superfamily. RsmJ family.

It is found in the cytoplasm. It catalyses the reaction guanosine(1516) in 16S rRNA + S-adenosyl-L-methionine = N(2)-methylguanosine(1516) in 16S rRNA + S-adenosyl-L-homocysteine + H(+). Specifically methylates the guanosine in position 1516 of 16S rRNA. In Hahella chejuensis (strain KCTC 2396), this protein is Ribosomal RNA small subunit methyltransferase J.